The primary structure comprises 141 residues: SsrA-binding protein (141 aa).

This sequence belongs to the SmpB family.

Its subcellular location is the cytoplasm. In terms of biological role, required for rescue of stalled ribosomes mediated by trans-translation. Binds to transfer-messenger RNA (tmRNA), required for stable association of tmRNA with ribosomes. tmRNA and SmpB together mimic tRNA shape, replacing the anticodon stem-loop with SmpB. tmRNA is encoded by the ssrA gene; the 2 termini fold to resemble tRNA(Ala) and it encodes a 'tag peptide', a short internal open reading frame. During trans-translation Ala-aminoacylated tmRNA acts like a tRNA, entering the A-site of stalled ribosomes, displacing the stalled mRNA. The ribosome then switches to translate the ORF on the tmRNA; the nascent peptide is terminated with the 'tag peptide' encoded by the tmRNA and targeted for degradation. The ribosome is freed to recommence translation, which seems to be the essential function of trans-translation. This is SsrA-binding protein from Ureaplasma parvum serovar 3 (strain ATCC 27815 / 27 / NCTC 11736).